The chain runs to 176 residues: MNKSDSLLSKDLFLLYQEFSEIRKIKQDTVFQSRRFKLVQDIKIKKNMYEQDIHYHYLSCQKFQISFNHDSIFYLRNKNYFDVLKKLKIGKYVPEIILDVHGLNQDQAKRKLGELLNICHKENLFCASVIHGHGRNILKNKIPIWLSRHPSVIAFYKIPKKFGRSTAILFLIHSSD.

The 76-residue stretch at 98–173 (LDVHGLNQDQ…RSTAILFLIH (76 aa)) folds into the Smr domain.

Belongs to the SmrB family. As to quaternary structure, associates with collided ribosomes, but not with correctly translating polysomes.

Its function is as follows. Acts as a ribosome collision sensor. Detects stalled/collided disomes (pairs of ribosomes where the leading ribosome is stalled and a second ribosome has collided with it) and endonucleolytically cleaves mRNA at the 5' boundary of the stalled ribosome. Stalled/collided disomes form a new interface (primarily via the 30S subunits) that binds SmrB. Cleaved mRNA becomes available for tmRNA ligation, leading to ribosomal subunit dissociation and rescue of stalled ribosomes. This chain is Ribosome rescue factor SmrB, found in Buchnera aphidicola subsp. Baizongia pistaciae (strain Bp).